Here is a 98-residue protein sequence, read N- to C-terminus: MANNNSAKKRIEIAERNRLRNRTYKSSMRTLMKRCFSACDAYGSAPGEEAKASVQASLREAFSKIDKAVKVGVLHRNNGANQKSRLSSAVRKVLEPTS.

Belongs to the bacterial ribosomal protein bS20 family.

Functionally, binds directly to 16S ribosomal RNA. The sequence is that of Small ribosomal subunit protein bS20 from Synechococcus sp. (strain CC9902).